The sequence spans 298 residues: Probable endonuclease 4 (298 aa).

Zn(2+) contacts are provided by histidine 69, histidine 111, glutamate 146, aspartate 180, histidine 183, histidine 215, aspartate 228, histidine 230, and glutamate 260.

This sequence belongs to the AP endonuclease 2 family. Requires Zn(2+) as cofactor.

It carries out the reaction Endonucleolytic cleavage to 5'-phosphooligonucleotide end-products.. Its function is as follows. Endonuclease IV plays a role in DNA repair. It cleaves phosphodiester bonds at apurinic or apyrimidinic (AP) sites, generating a 3'-hydroxyl group and a 5'-terminal sugar phosphate. The sequence is that of Probable endonuclease 4 from Bacillus cereus (strain AH187).